We begin with the raw amino-acid sequence, 169 residues long: Ribosome maturation factor RimM (169 aa).

Positions 93–167 (PENSFFISDI…KISVILPKGL (75 aa)) constitute a PRC barrel domain.

The protein belongs to the RimM family. As to quaternary structure, binds ribosomal protein uS19.

The protein localises to the cytoplasm. An accessory protein needed during the final step in the assembly of 30S ribosomal subunit, possibly for assembly of the head region. Essential for efficient processing of 16S rRNA. May be needed both before and after RbfA during the maturation of 16S rRNA. It has affinity for free ribosomal 30S subunits but not for 70S ribosomes. This is Ribosome maturation factor RimM from Ruminiclostridium cellulolyticum (strain ATCC 35319 / DSM 5812 / JCM 6584 / H10) (Clostridium cellulolyticum).